Reading from the N-terminus, the 308-residue chain is MRLLPEWFLLLFGPWLLRKAVSAQIPESGRPQYLGLRPAAAGAGAPGQQLPEPRSSDGLGVGRAWSWAWPTNHTGALARAGAAGALPAQRTKRKPSIKAARAKKIFGWGDFYFRVHTLKFSLLVTGKIVDHVNGTFSVYFRHNSSSLGNLSVSIVPPSKRVEFGGVWLPGPVPHPLQSTLALEGVLPGLGPPLGMAAAAAGPGLGGSLGGALAGPLGGALGVPGAKESRAFNCHVEYEKTNRARKHRPCLYDPSQVCFTEHTQSQAAWLCAKPFKVICIFVSFLSFDYKLVQKVCPDYNFQSEHPYFG.

A signal peptide spans 1 to 23 (MRLLPEWFLLLFGPWLLRKAVSA). The interval 24–84 (QIPESGRPQY…GALARAGAAG (61 aa)) is II. Low complexity predominate over residues 40-51 (AAGAGAPGQQLP). Positions 40-59 (AAGAGAPGQQLPEPRSSDGL) are disordered. N-linked (GlcNAc...) asparagine glycosylation is found at Asn72, Asn133, Asn143, and Asn149. The III stretch occupies residues 85-163 (ALPAQRTKRK…IVPPSKRVEF (79 aa)). Positions 164–224 (GGVWLPGPVP…PLGGALGVPG (61 aa)) are IV (linker domain). The tract at residues 225–308 (AKESRAFNCH…NFQSEHPYFG (84 aa)) is v (Cys-rich).

It belongs to the neurexophilin family. Post-translationally, may be proteolytically processed at the boundary between the N-terminal non-conserved and the central conserved domain in neuron-like cells. As to expression, expressed in brain, spleen, and testis.

Its subcellular location is the secreted. Its function is as follows. May be signaling molecules that resemble neuropeptides and that act by binding to alpha-neurexins and possibly other receptors. The polypeptide is Neurexophilin-4 (NXPH4) (Homo sapiens (Human)).